The following is a 331-amino-acid chain: tRNA-cytidine(32) 2-sulfurtransferase (331 aa).

Residues 73–78 (SGGKDS) carry the PP-loop motif motif. Residues Cys-148, Cys-151, and Cys-239 each contribute to the [4Fe-4S] cluster site.

This sequence belongs to the TtcA family. Homodimer. Mg(2+) is required as a cofactor. Requires [4Fe-4S] cluster as cofactor.

Its subcellular location is the cytoplasm. The enzyme catalyses cytidine(32) in tRNA + S-sulfanyl-L-cysteinyl-[cysteine desulfurase] + AH2 + ATP = 2-thiocytidine(32) in tRNA + L-cysteinyl-[cysteine desulfurase] + A + AMP + diphosphate + H(+). The protein operates within tRNA modification. In terms of biological role, catalyzes the ATP-dependent 2-thiolation of cytidine in position 32 of tRNA, to form 2-thiocytidine (s(2)C32). The sulfur atoms are provided by the cysteine/cysteine desulfurase (IscS) system. This Burkholderia mallei (strain NCTC 10247) protein is tRNA-cytidine(32) 2-sulfurtransferase.